Here is a 632-residue protein sequence, read N- to C-terminus: DNA ligase (632 aa).

NAD(+) is bound by residues 45-49 and 89-90; these read NEDYD and SI. The active-site N6-AMP-lysine intermediate is K127. NAD(+) is bound by residues R143, E174, and K286. 4 residues coordinate Zn(2+): C374, C377, C390, and C396. Residues 561 to 632 form the BRCT domain; that stretch reads DKRIVFTGKM…EADYLSKITM (72 aa).

Belongs to the NAD-dependent DNA ligase family. LigA subfamily. Mg(2+) serves as cofactor. Mn(2+) is required as a cofactor.

It carries out the reaction NAD(+) + (deoxyribonucleotide)n-3'-hydroxyl + 5'-phospho-(deoxyribonucleotide)m = (deoxyribonucleotide)n+m + AMP + beta-nicotinamide D-nucleotide.. Functionally, DNA ligase that catalyzes the formation of phosphodiester linkages between 5'-phosphoryl and 3'-hydroxyl groups in double-stranded DNA using NAD as a coenzyme and as the energy source for the reaction. It is essential for DNA replication and repair of damaged DNA. This is DNA ligase from Vesicomyosocius okutanii subsp. Calyptogena okutanii (strain HA).